Reading from the N-terminus, the 70-residue chain is Movement protein TGBp3 (70 aa).

Topologically, residues 1–4 (MEVN) are lumenal. Residues 5-27 (TYLNAIILVLVVTIIAVISTSLV) traverse the membrane as a helical segment. The Cytoplasmic portion of the chain corresponds to 28 to 70 (RTEPCVIKITGESITVLACKLDAETIKAIADLKPLSVERLSFH).

Belongs to the Tymovirales TGBp3 protein family.

It localises to the host endoplasmic reticulum membrane. Functionally, plays a role in viral cell-to-cell propagation, by facilitating genome transport to neighboring plant cells through plasmosdesmata. May induce the formation of granular vesicles derived from the endoplasmic reticulum, which align on actin filaments. The sequence is that of Movement protein TGBp3 from Brassica campestris (Field mustard).